Here is a 188-residue protein sequence, read N- to C-terminus: V-type proton ATPase subunit E (188 aa).

The protein belongs to the V-ATPase E subunit family.

Its function is as follows. Produces ATP from ADP in the presence of a proton gradient across the membrane. In Dictyoglomus thermophilum (strain ATCC 35947 / DSM 3960 / H-6-12), this protein is V-type proton ATPase subunit E.